The sequence spans 342 residues: 4-hydroxy-2-oxovalerate aldolase (342 aa).

Residues 8–260 (ITVHDMTLRD…ATGVDLFKMQ (253 aa)) form the Pyruvate carboxyltransferase domain. 16–17 (RD) lines the substrate pocket. A Mn(2+)-binding site is contributed by Asp-17. The active-site Proton acceptor is His-20. The substrate site is built by Ser-170 and His-199. His-199 and His-201 together coordinate Mn(2+). Tyr-290 lines the substrate pocket.

It belongs to the 4-hydroxy-2-oxovalerate aldolase family.

The enzyme catalyses (S)-4-hydroxy-2-oxopentanoate = acetaldehyde + pyruvate. The sequence is that of 4-hydroxy-2-oxovalerate aldolase from Albidiferax ferrireducens (strain ATCC BAA-621 / DSM 15236 / T118) (Rhodoferax ferrireducens).